The sequence spans 124 residues: CRISPR-associated endoribonuclease Cas2 4 (124 aa).

Mg(2+) is bound at residue aspartate 40.

The protein belongs to the CRISPR-associated endoribonuclease Cas2 protein family. In terms of assembly, homodimer, forms a heterotetramer with a Cas1 homodimer. Requires Mg(2+) as cofactor.

CRISPR (clustered regularly interspaced short palindromic repeat), is an adaptive immune system that provides protection against mobile genetic elements (viruses, transposable elements and conjugative plasmids). CRISPR clusters contain sequences complementary to antecedent mobile elements and target invading nucleic acids. CRISPR clusters are transcribed and processed into CRISPR RNA (crRNA). Functions as a ssRNA-specific endoribonuclease. Involved in the integration of spacer DNA into the CRISPR cassette. This is CRISPR-associated endoribonuclease Cas2 4 from Rhodospirillum rubrum (strain ATCC 11170 / ATH 1.1.1 / DSM 467 / LMG 4362 / NCIMB 8255 / S1).